Consider the following 199-residue polypeptide: Small ribosomal subunit protein uS4 (199 aa).

In terms of domain architecture, S4 RNA-binding spans 91–151; it reads SRLDNLVYRF…EKSKNVKAIA (61 aa).

It belongs to the universal ribosomal protein uS4 family. In terms of assembly, part of the 30S ribosomal subunit. Contacts protein S5. The interaction surface between S4 and S5 is involved in control of translational fidelity.

Functionally, one of the primary rRNA binding proteins, it binds directly to 16S rRNA where it nucleates assembly of the body of the 30S subunit. Its function is as follows. With S5 and S12 plays an important role in translational accuracy. This is Small ribosomal subunit protein uS4 from Exiguobacterium sp. (strain ATCC BAA-1283 / AT1b).